We begin with the raw amino-acid sequence, 113 residues long: Tachykinin-4 (113 aa).

A signal peptide spans 1–20; that stretch reads MLPCLALLLLMELSVCTVAG. Residue Met67 is modified to Methionine amide. The propeptide occupies 71-79; that stretch reads VGGRPLIQP. Leucine amide is present on Leu95. Positions 98–113 are excised as a propeptide; sequence RSLFTEGREDEAQGSE.

The protein belongs to the tachykinin family. As to expression, expressed at low levels in the uterus of both pregnant and non-pregnant women. Isoform 1 is found only in the adrenal gland and fetal liver. Isoform 2 is found in heart, liver, bone marrow, prostate, adrenal gland and testis. Isoform 3 and isoform 4 are expressed predominantly in adrenal gland and placenta.

The protein localises to the secreted. In terms of biological role, tachykinins are active peptides which excite neurons, evoke behavioral responses, are potent vasodilators and secretagogues, and contract (directly or indirectly) many smooth muscles. Endokinin-A induces thermal hyperalgesia and pain-related behavior such as scratching following intrathecal administration in rats. These effects are suppressed by treatment with endokinin-C. Endokinin-A/B reduces arterial blood pressure and increases sperm motility. In Homo sapiens (Human), this protein is Tachykinin-4.